The following is a 270-amino-acid chain: Phosphate import ATP-binding protein PstB 1 (270 aa).

An ABC transporter domain is found at 24–265; that stretch reads LAVERLNLFY…PYQRQTEDYI (242 aa). Residue 56 to 63 coordinates ATP; it reads GPSGCGKS.

Belongs to the ABC transporter superfamily. Phosphate importer (TC 3.A.1.7) family. In terms of assembly, the complex is composed of two ATP-binding proteins (PstB), two transmembrane proteins (PstC and PstA) and a solute-binding protein (PstS).

Its subcellular location is the cell inner membrane. It carries out the reaction phosphate(out) + ATP + H2O = ADP + 2 phosphate(in) + H(+). Its function is as follows. Part of the ABC transporter complex PstSACB involved in phosphate import. Responsible for energy coupling to the transport system. The chain is Phosphate import ATP-binding protein PstB 1 from Yersinia pestis bv. Antiqua (strain Antiqua).